Consider the following 534-residue polypeptide: Probable protein kinase UbiB (534 aa).

Residues Asp-23–Trp-43 traverse the membrane as a helical segment. The Protein kinase domain maps to Arg-125–Leu-492. Residues Leu-131–Val-139 and Lys-153 contribute to the ATP site. Asp-288 serves as the catalytic Proton acceptor. The next 2 helical transmembrane spans lie at Trp-490–Gly-510 and Leu-512–Val-532.

This sequence belongs to the ABC1 family. UbiB subfamily.

The protein localises to the cell inner membrane. The protein operates within cofactor biosynthesis; ubiquinone biosynthesis [regulation]. In terms of biological role, is probably a protein kinase regulator of UbiI activity which is involved in aerobic coenzyme Q (ubiquinone) biosynthesis. The polypeptide is Probable protein kinase UbiB (Pseudomonas fluorescens (strain SBW25)).